Reading from the N-terminus, the 144-residue chain is Large ribosomal subunit protein uL15 (144 aa).

Positions 1 to 54 (MRLNTLSPAEGSKKAGKRLGRGIGSGLGKTGGRGHKGQKSRSGGGVRRGFEGGQ) are disordered. A compositionally biased stretch (gly residues) spans 21 to 31 (RGIGSGLGKTG).

This sequence belongs to the universal ribosomal protein uL15 family. Part of the 50S ribosomal subunit.

Its function is as follows. Binds to the 23S rRNA. This Escherichia coli (strain K12 / MC4100 / BW2952) protein is Large ribosomal subunit protein uL15.